A 197-amino-acid chain; its full sequence is MGVTRIGLLGGSFDPVHVAHIALADTARQFLGLDQVQLIPAANPWQRQPLKASAPHRLRMLELAIAGHPALAINPVEIERGGATYTADTVRALPGGPQYFWLLGTDQLQNFCTWRDWQDIAARIELAVATRPGASIAPPAELAAWLAAHRRQLHELPFAPMAVSASDIRQRLAAGAATDGLLPEPVAAYIATHHLYR.

Belongs to the NadD family.

The catalysed reaction is nicotinate beta-D-ribonucleotide + ATP + H(+) = deamido-NAD(+) + diphosphate. It participates in cofactor biosynthesis; NAD(+) biosynthesis; deamido-NAD(+) from nicotinate D-ribonucleotide: step 1/1. Its function is as follows. Catalyzes the reversible adenylation of nicotinate mononucleotide (NaMN) to nicotinic acid adenine dinucleotide (NaAD). The sequence is that of Probable nicotinate-nucleotide adenylyltransferase from Bordetella pertussis (strain Tohama I / ATCC BAA-589 / NCTC 13251).